Consider the following 107-residue polypeptide: Integration host factor subunit beta (107 aa).

The interval 55–107 (RRPARVGRNPKSGEKVQVPEKHVPHFKPGKELRERVDGRAGEPLKNDEPEDAQ) is disordered. The span at 65–101 (KSGEKVQVPEKHVPHFKPGKELRERVDGRAGEPLKND) shows a compositional bias: basic and acidic residues.

This sequence belongs to the bacterial histone-like protein family. In terms of assembly, heterodimer of an alpha and a beta chain.

In terms of biological role, this protein is one of the two subunits of integration host factor, a specific DNA-binding protein that functions in genetic recombination as well as in transcriptional and translational control. The chain is Integration host factor subunit beta from Burkholderia pseudomallei (strain K96243).